The primary structure comprises 151 residues: Conidium-specific protein (151 aa).

The segment at 1 to 72 (MAKPHCSSRS…FSGDPDSEVE (72 aa)) is disordered. Residues 48–60 (RKDNSADKGDTLR) show a composition bias toward basic and acidic residues.

The sequence is that of Conidium-specific protein (SpoC1-C1D) from Emericella nidulans (strain FGSC A4 / ATCC 38163 / CBS 112.46 / NRRL 194 / M139) (Aspergillus nidulans).